A 2495-amino-acid chain; its full sequence is Zinc finger protein 462 (2495 aa).

3 C2H2-type zinc fingers span residues 4–27, 108–131, and 162–185; these read LQCD…QDVH, FQCK…RKVH, and FSCQ…KMYH. Lysine 20 is covalently cross-linked (Glycyl lysine isopeptide (Lys-Gly) (interchain with G-Cter in SUMO1); alternate). A Glycyl lysine isopeptide (Lys-Gly) (interchain with G-Cter in SUMO2); alternate cross-link involves residue lysine 20. Residues 215 to 241 form an interaction with PBX1 region; sequence PCKELPAEVVERSILESMVKPLTKSRG. Glycyl lysine isopeptide (Lys-Gly) (interchain with G-Cter in SUMO2) cross-links involve residues lysine 234 and lysine 271. Disordered stretches follow at residues 278 to 301, 329 to 357, and 370 to 395; these read QQEG…NSTY, RPNS…NSGL, and DMTN…DLNE. A compositionally biased stretch (low complexity) spans 332 to 343; it reads SSSTSKFSSSMS. Glycyl lysine isopeptide (Lys-Gly) (interchain with G-Cter in SUMO2) cross-links involve residues lysine 337, lysine 348, and lysine 350. Residues serine 351 and serine 355 each carry the phosphoserine modification. Residues 370–387 are compositionally biased toward polar residues; it reads DMTNSSADLDTNSMLNDS. Lysine 429 is covalently cross-linked (Glycyl lysine isopeptide (Lys-Gly) (interchain with G-Cter in SUMO2)). C2H2-type zinc fingers lie at residues 440-463 and 471-493; these read FQCP…ENIH and YKCD…KQCH. Lysine 485 is covalently cross-linked (Glycyl lysine isopeptide (Lys-Gly) (interchain with G-Cter in SUMO2)). The segment at 492–590 is disordered; sequence CHTGTSDWDT…PQPPTQAPPL (99 aa). Residues 493 to 502 show a composition bias toward polar residues; the sequence is HTGTSDWDTV. The span at 503-515 shows a compositional bias: low complexity; sequence NSQSESLSSSLNE. Residues 542–590 show a composition bias toward pro residues; the sequence is PPQPPPPLPPPPPPPSQPLPQPPPPPLQSPHQVPPPTQQPQPPTQAPPL. The segment at 593–616 adopts a C2H2-type 6 zinc-finger fold; that stretch reads YKCTMCSYSTMTLKGLRVHQQHKH. Glycyl lysine isopeptide (Lys-Gly) (interchain with G-Cter in SUMO2) cross-links involve residues lysine 624, lysine 650, and lysine 661. The segment at 629–654 is disordered; the sequence is PSSLPLENETDSHPSSSNTVKKSQTS. The span at 641-654 shows a compositional bias: polar residues; the sequence is HPSSSNTVKKSQTS. Serine 681 carries the phosphoserine modification. A Glycyl lysine isopeptide (Lys-Gly) (interchain with G-Cter in SUMO2) cross-link involves residue lysine 699. C2H2-type zinc fingers lie at residues 835-858, 878-900, and 917-940; these read YYCK…QRMH, YRCL…YGEH, and YRCR…QRMH. Lysine 978 is covalently cross-linked (Glycyl lysine isopeptide (Lys-Gly) (interchain with G-Cter in SUMO2)). The interval 980–999 is disordered; the sequence is MATSTPVARGGGLPATFNKN. The C2H2-type 10 zinc-finger motif lies at 1023–1046; that stretch reads YDCDVCSFASPNMHSVLVHYQKKH. Serine 1083 carries the phosphoserine modification. Residue lysine 1128 forms a Glycyl lysine isopeptide (Lys-Gly) (interchain with G-Cter in SUMO2) linkage. At serine 1159 the chain carries Phosphoserine. Residues lysine 1196, lysine 1204, lysine 1210, and lysine 1232 each participate in a glycyl lysine isopeptide (Lys-Gly) (interchain with G-Cter in SUMO2) cross-link. 2 consecutive C2H2-type zinc fingers follow at residues 1254 to 1277 and 1459 to 1482; these read LKCR…KKDH and YQCT…GKKH. Lysine 1488 participates in a covalent cross-link: Glycyl lysine isopeptide (Lys-Gly) (interchain with G-Cter in SUMO2). The C2H2-type 13 zinc finger occupies 1504–1527; that stretch reads YKCRHCPYINTRIHGVLTHYQKRH. Residues lysine 1560 and lysine 1580 each participate in a glycyl lysine isopeptide (Lys-Gly) (interchain with G-Cter in SUMO2) cross-link. 3 consecutive C2H2-type zinc fingers follow at residues 1566 to 1589, 1649 to 1672, and 1686 to 1709; these read YRCK…EKYH, FRCQ…RIKH, and FKCA…QKRH. Residues lysine 1687 and lysine 1769 each participate in a glycyl lysine isopeptide (Lys-Gly) (interchain with G-Cter in SUMO2) cross-link. The C2H2-type 17 zinc finger occupies 1881–1903; the sequence is FQCKHCDSKLQSIAELTSHLNIH. Lysine 1935 participates in a covalent cross-link: Glycyl lysine isopeptide (Lys-Gly) (interchain with G-Cter in SUMO2). Residues 1957–1981 form a C2H2-type 18; degenerate zinc finger; the sequence is YKCKFCVEVHPTLRAICNHLRKHVQ. Lysine 1993 carries the post-translational modification N6-methyllysine. 3 C2H2-type zinc fingers span residues 2014 to 2037, 2043 to 2066, and 2072 to 2095; these read YSCQ…QTHH, FRCK…LKAH, and YKCS…LKVH. Lysine 2093 is covalently cross-linked (Glycyl lysine isopeptide (Lys-Gly) (interchain with G-Cter in SUMO2)). Composition is skewed to polar residues over residues 2112–2121 and 2132–2149; these read SHAHPSSQKA and DSSY…NHYQ. Residues 2112-2172 are disordered; that stretch reads SHAHPSSQKA…VPPSGTAAGT (61 aa). A phosphoserine mark is found at serine 2161 and serine 2166. 3 consecutive C2H2-type zinc fingers follow at residues 2180 to 2203, 2209 to 2232, and 2243 to 2265; these read LHCE…RDKH, FKCK…EAGH, and LRCP…IVLH. Lysine 2282 is covalently cross-linked (Glycyl lysine isopeptide (Lys-Gly) (interchain with G-Cter in SUMO2)). C2H2-type zinc fingers lie at residues 2289–2311 and 2317–2340; these read FRCD…IEKH and YKCQ…RDEH. A disordered region spans residues 2361–2387; that stretch reads KEKIESSSSEDEDKDDEMSSKAEDREL. The segment covering 2377–2387 has biased composition (basic and acidic residues); sequence EMSSKAEDREL. The C2H2-type 27 zinc-finger motif lies at 2403–2425; it reads FPCEFCGRAFSQGSEWERHVLRH. A Glycyl lysine isopeptide (Lys-Gly) (interchain with G-Cter in SUMO2) cross-link involves residue lysine 2493.

As to quaternary structure, interacts with PBX1 isoform PBX1b; this interaction prevents PBX1-HOXA9 heterodimer from forming and binding to DNA. In terms of tissue distribution, expressed in the cerebral cortex (at protein level). Expressed in embryonic stem cells (at protein level). Expressed in heart, liver, kidney, muscle, and female and male genital tracts (at protein level).

The protein localises to the nucleus. In terms of biological role, zinc finger nuclear factor involved in transcription by regulating chromatin structure and organization. Involved in the pluripotency and differentiation of embryonic stem cells by regulating SOX2, POU5F1/OCT4, and NANOG. By binding PBX1, prevents the heterodimerization of PBX1 and HOXA9 and their binding to DNA. Regulates neuronal development and neural cell differentiation. This is Zinc finger protein 462 from Mus musculus (Mouse).